Here is a 908-residue protein sequence, read N- to C-terminus: MKIIFPILSNPVFRRTVKLLLCLLWIGYSQGTTHVLRFGGIFEYVESGPMGAEELAFRFAVNTINRNRTLLPNTTLTYDTQKINLYDSFEASKKACDQLSLGVAAIFGPSHSSSANAVQSICNALGVPHIQTRWKHQVSDNKDSFYVSLYPDFSSLSRAILDLVQFFKWKTVTVVYDDSTGLIRLQELIKAPSRYNLRLKIRQLPADTKDAKPLLKEMKRGKEFHVIFDCSHEMAAGILKQALAMGMMTEYYHYIFTTLDLFALDVEPYRYSGVNMTGFRILNTENTQVSSIIEKWSMERLQAPPKPDSGLLDGFMTTDAALMYDAVHVVSVAVQQFPQMTVSSLQCNRHKPWRFGTRFMSLIKEAHWEGLTGRITFNKTNGLRTDFDLDVISLKEEGLEKIGTWDPASGLNMTESQKGKPANITDSLSNRSLIVTTILEEPYVLFKKSDKPLYGNDRFEGYCIDLLRELSTILGFTYEIRLVEDGKYGAQDDANGQWNGMVRELIDHKADLAVAPLAITYVREKVIDFSKPFMTLGISILYRKPNGTNPGVFSFLNPLSPDIWMYILLAYLGVSCVLFVIARFSPYEWYNPHPCNPDSDVVENNFTLLNSFWFGVGALMQQGSELMPKALSTRIVGGIWWFFTLIIISSYTANLAAFLTVERMESPIDSADDLAKQTKIEYGAVEDGATMTFFKKSKISTYDKMWAFMSSRRQSVLVKSNEEGIQRVLTSDYAFLMESTTIEFVTQRNCNLTQIGGLIDSKGYGVGTPMGSPYRDKITIAILQLQEEGKLHMMKEKWWRGNGCPEEESKEASALGVQNIGGIFIVLAAGLVLSVFVAVGEFLYKSKKNAQLEKRSFCSAMVEELRMSLKCQRRLKHKPQAPVIVKTEEVINMHTFNDRRLPGKETMA.

Residues 1–31 (MKIIFPILSNPVFRRTVKLLLCLLWIGYSQG) form the signal peptide. Residues 32–561 (TTHVLRFGGI…VFSFLNPLSP (530 aa)) lie on the Extracellular side of the membrane. 7 N-linked (GlcNAc...) asparagine glycosylation sites follow: asparagine 67, asparagine 73, asparagine 275, asparagine 378, asparagine 412, asparagine 423, and asparagine 430. Cysteine 96 and cysteine 347 are oxidised to a cystine. The L-glutamate site is built by proline 516, alanine 518, and arginine 523. Asparagine 546 carries an N-linked (GlcNAc...) asparagine glycan. Residues 562-582 (DIWMYILLAYLGVSCVLFVIA) traverse the membrane as a helical segment. Residues 583-635 (RFSPYEWYNPHPCNPDSDVVENNFTLLNSFWFGVGALMQQGSELMPKALSTRI) are Cytoplasmic-facing. A helical transmembrane segment spans residues 636–656 (VGGIWWFFTLIIISSYTANLA). The Extracellular segment spans residues 657 to 819 (AFLTVERMES…KEASALGVQN (163 aa)). 3 residues coordinate L-glutamate: alanine 689, threonine 690, and glutamate 738. Cysteines 750 and 804 form a disulfide. N-linked (GlcNAc...) asparagine glycosylation is present at asparagine 751. Residues 820 to 840 (IGGIFIVLAAGLVLSVFVAVG) traverse the membrane as a helical segment. Residues 841 to 908 (EFLYKSKKNA…RRLPGKETMA (68 aa)) lie on the Cytoplasmic side of the membrane. Residues serine 846 and serine 868 each carry the phosphoserine; by PKC modification. A Glycyl lysine isopeptide (Lys-Gly) (interchain with G-Cter in SUMO1) cross-link involves residue lysine 886.

It belongs to the glutamate-gated ion channel (TC 1.A.10.1) family. GRIK2 subfamily. In terms of assembly, homotetramer and heterotetramer with GRIK5. Tetramers may be formed by the dimerization of dimers. Assembles into a kainate-gated homomeric channel that does not bind AMPA. Can form functional heteromeric receptors with GRIK5. Can form functional heteromeric receptors with GRIK3 and GRIK4. Interacts with DLG4. Interacts with NETO2. Interacts (via C-terminus) with KLHL17 (via kelch repeats); the interaction targets GRIK2 for degradation via ubiquitin-proteasome pathway. Sumoylation mediates kainate receptor-mediated endocytosis and regulates synaptic transmission. Sumoylation is enhanced by PIAS3 and desumoylated by SENP1. In terms of processing, ubiquitinated. Ubiquitination regulates the GRIK2 levels at the synapse by leading kainate receptor degradation through proteasome. Post-translationally, phosphorylated by PKC at Ser-868 upon agonist activation, this directly enhance sumoylation. In terms of tissue distribution, expression is higher in cerebellum than in cerebral cortex.

The protein resides in the cell membrane. Its subcellular location is the postsynaptic cell membrane. The enzyme catalyses Ca(2+)(in) = Ca(2+)(out). The catalysed reaction is Na(+)(in) = Na(+)(out). Cold receptor activity activated by temperatures between 10-19 degrees Celsius. Its function is as follows. Ionotropic glutamate receptor that functions as a cation permeable ligand-gated ion channel, gated by L-glutamate and the glutamatergic agonist kainic acid. L-glutamate acts as an excitatory neurotransmitter at many synapses in the central nervous system. Binding of the excitatory neurotransmitter L-glutamate induces a conformation change, leading to the opening of the cation channel, and thereby converts the chemical signal to an electrical impulse. The receptor then desensitizes rapidly and enters a transient inactive state, characterized by the presence of bound agonist. Modulates cell surface expression of NETO2. In association with GRIK3, involved in presynaptic facilitation of glutamate release at hippocampal mossy fiber synapses. In terms of biological role, independent of its ionotropic glutamate receptor activity, acts as a thermoreceptor conferring sensitivity to cold temperatures. Functions in dorsal root ganglion neurons. In Homo sapiens (Human), this protein is Glutamate receptor ionotropic, kainate 2 (GRIK2).